The sequence spans 165 residues: SDTLYVLSLPTLVYYYAARNHWPFGTGFCKFVRFLFYWNLYCSVLFLTCISVHRYMGICHPLRALRWGRPRFASLLCLAVWLVVAGCLVPNLFFVTTSPNGTTILCHDTTRPEEFDHYVHFSSAVMVLLFGLPFLVTLVCYGLMARRLYRPLPGAGQSSSRLRSL.

Residues 1 to 16 (SDTLYVLSLPTLVYYY) form a helical membrane-spanning segment. Residues 17–30 (AARNHWPFGTGFCK) are Extracellular-facing. The chain crosses the membrane as a helical span at residues 31 to 51 (FVRFLFYWNLYCSVLFLTCIS). The Cytoplasmic portion of the chain corresponds to 52–74 (VHRYMGICHPLRALRWGRPRFAS). Residues 75 to 95 (LLCLAVWLVVAGCLVPNLFFV) traverse the membrane as a helical segment. Over 96 to 124 (TTSPNGTTILCHDTTRPEEFDHYVHFSSA) the chain is Extracellular. N-linked (GlcNAc...) asparagine glycosylation occurs at N100. Residues 125 to 145 (VMVLLFGLPFLVTLVCYGLMA) form a helical membrane-spanning segment. Over 146-165 (RRLYRPLPGAGQSSSRLRSL) the chain is Cytoplasmic.

Belongs to the G-protein coupled receptor 1 family.

It localises to the cell membrane. In terms of biological role, receptor for UTP and UDP coupled to G-proteins that activate a phosphatidylinositol-calcium second messenger system. This is P2Y purinoceptor 4 (P2RY4) from Cricetulus griseus (Chinese hamster).